The following is a 266-amino-acid chain: HLA class II histocompatibility antigen, DR beta 5 chain (266 aa).

Positions 1 to 29 (MVCLKLPGGSYMAKLTVTLMVLSSPLALA) are cleaved as a signal peptide. Positions 30 to 124 (GDTRPRFLQQ…GESFTVQRRV (95 aa)) are beta-1. Over 30–227 (GDTRPRFLQQ…RAQSESAQSK (198 aa)) the chain is Extracellular. Cystine bridges form between Cys44/Cys108 and Cys146/Cys202. Residue Asn48 is glycosylated (N-linked (GlcNAc...) asparagine). The interval 125–227 (EPKVTVYPAR…RAQSESAQSK (103 aa)) is beta-2. The Ig-like C1-type domain maps to 126 to 214 (PKVTVYPART…EHPSVTSPLT (89 aa)). The chain crosses the membrane as a helical span at residues 228–248 (MLSGVGGFVLGLLFLGAGLFI). At 249-266 (YFKNQKGHSGLHPTGLVS) the chain is on the cytoplasmic side.

The protein belongs to the MHC class II family. As to quaternary structure, heterodimer of an alpha and a beta subunit; also referred as MHC class II molecule. In the endoplasmic reticulum (ER) it forms a heterononamer; 3 MHC class II molecules bind to a CD74 homotrimer (also known as invariant chain or HLA class II histocompatibility antigen gamma chain). In the endosomal/lysosomal system; CD74 undergoes sequential degradation by various proteases; leaving a small fragment termed CLIP on each MHC class II molecule. MHC class II molecule interacts with HLA_DM, and HLA_DO in B-cells, in order to release CLIP and facilitate the binding of antigenic peptides. In terms of processing, ubiquitinated by MARCH1 and MARCH8 at Lys-254 leading to down-regulation of MHC class II.

It is found in the cell membrane. It localises to the endoplasmic reticulum membrane. The protein localises to the golgi apparatus. Its subcellular location is the trans-Golgi network membrane. The protein resides in the endosome membrane. It is found in the lysosome membrane. It localises to the late endosome membrane. In terms of biological role, binds peptides derived from antigens that access the endocytic route of antigen presenting cells (APC) and presents them on the cell surface for recognition by the CD4 T-cells. The peptide binding cleft accommodates peptides of 10-30 residues. The peptides presented by MHC class II molecules are generated mostly by degradation of proteins that access the endocytic route, where they are processed by lysosomal proteases and other hydrolases. Exogenous antigens that have been endocytosed by the APC are thus readily available for presentation via MHC II molecules, and for this reason this antigen presentation pathway is usually referred to as exogenous. As membrane proteins on their way to degradation in lysosomes as part of their normal turn-over are also contained in the endosomal/lysosomal compartments, exogenous antigens must compete with those derived from endogenous components. Autophagy is also a source of endogenous peptides, autophagosomes constitutively fuse with MHC class II loading compartments. In addition to APCs, other cells of the gastrointestinal tract, such as epithelial cells, express MHC class II molecules and CD74 and act as APCs, which is an unusual trait of the GI tract. To produce a MHC class II molecule that presents an antigen, three MHC class II molecules (heterodimers of an alpha and a beta chain) associate with a CD74 trimer in the ER to form a heterononamer. Soon after the entry of this complex into the endosomal/lysosomal system where antigen processing occurs, CD74 undergoes a sequential degradation by various proteases, including CTSS and CTSL, leaving a small fragment termed CLIP (class-II-associated invariant chain peptide). The removal of CLIP is facilitated by HLA-DM via direct binding to the alpha-beta-CLIP complex so that CLIP is released. HLA-DM stabilizes MHC class II molecules until primary high affinity antigenic peptides are bound. The MHC II molecule bound to a peptide is then transported to the cell membrane surface. In B-cells, the interaction between HLA-DM and MHC class II molecules is regulated by HLA-DO. Primary dendritic cells (DCs) also to express HLA-DO. Lysosomal microenvironment has been implicated in the regulation of antigen loading into MHC II molecules, increased acidification produces increased proteolysis and efficient peptide loading. This Homo sapiens (Human) protein is HLA class II histocompatibility antigen, DR beta 5 chain.